Reading from the N-terminus, the 186-residue chain is ADP-ribosylation factor-like protein 8A (186 aa).

Positions 1–19 form an intramembrane region, note=Mediates targeting to membranes; the sequence is MIALFNKLLDWFKALFWKE. GTP is bound by residues 29 to 35, 71 to 75, and 130 to 133; these read QYSGKTT, DIGGQ, and NKRD.

This sequence belongs to the small GTPase superfamily. Arf family. Interacts with PLEKHM1. When GTP-bound, interacts with RUFY3 and RUFY4, but not with RUFY1, nor RUFY2.

The protein resides in the late endosome membrane. It is found in the lysosome membrane. It localises to the cytoplasm. The protein localises to the cytoskeleton. Its subcellular location is the spindle. The protein resides in the cell projection. It is found in the axon. It localises to the synapse. Plays a role in lysosomes motility. In neurons, mediates the anterograde axonal long-range transport of presynaptic lysosome-related vesicles required for presynaptic biogenesis and synaptic function. May play a role in chromosome segregation. The sequence is that of ADP-ribosylation factor-like protein 8A (Arl8a) from Mus musculus (Mouse).